We begin with the raw amino-acid sequence, 918 residues long: Melanoma-associated antigen E1 (918 aa).

Disordered stretches follow at residues 1 to 140 (MSLV…GSKA), 154 to 227 (EQRH…SNGL), and 367 to 388 (SQMS…ANNP). Residues 8-23 (SRRRRGGRANARRNNG) are compositionally biased toward basic residues. Polar residues-rich tracts occupy residues 70–96 (VPPT…SEMP), 113–126 (GLNT…SEGP), and 213–227 (EDPS…SNGL). 2 consecutive MAGE domains span residues 459–658 (MEQN…YNEA) and 706–897 (LESK…YREA). Positions 704–918 (SRLESKARKL…RRPLIVRNLR (215 aa)) are interaction with DTNA.

In terms of assembly, interacts with DTNA. Interacts with TRIM28. Expressed in cell bodies and dendrites of hippocampal and Purkinje neurons. Also expressed in peripheral nerve, where it localizes to the perineurium and myelin (at protein level). Predominantly expressed in brain and at low levels in the heart, liver, kidney, spleen, testis, lung, thymus, placenta and skeletal muscle.

Its subcellular location is the cytoplasm. The protein resides in the perinuclear region. It is found in the nucleus. The protein localises to the cell membrane. Its function is as follows. May enhance ubiquitin ligase activity of RING-type zinc finger-containing E3 ubiquitin-protein ligases. Proposed to act through recruitment and/or stabilization of the Ubl-conjugating enzyme (E2) at the E3:substrate complex. This is Melanoma-associated antigen E1 (Magee1) from Mus musculus (Mouse).